The sequence spans 103 residues: Pyrimidine/purine nucleoside phosphorylase (103 aa).

This sequence belongs to the nucleoside phosphorylase PpnP family.

It catalyses the reaction a purine D-ribonucleoside + phosphate = a purine nucleobase + alpha-D-ribose 1-phosphate. The enzyme catalyses adenosine + phosphate = alpha-D-ribose 1-phosphate + adenine. It carries out the reaction cytidine + phosphate = cytosine + alpha-D-ribose 1-phosphate. The catalysed reaction is guanosine + phosphate = alpha-D-ribose 1-phosphate + guanine. It catalyses the reaction inosine + phosphate = alpha-D-ribose 1-phosphate + hypoxanthine. The enzyme catalyses thymidine + phosphate = 2-deoxy-alpha-D-ribose 1-phosphate + thymine. It carries out the reaction uridine + phosphate = alpha-D-ribose 1-phosphate + uracil. The catalysed reaction is xanthosine + phosphate = alpha-D-ribose 1-phosphate + xanthine. Its function is as follows. Catalyzes the phosphorolysis of diverse nucleosides, yielding D-ribose 1-phosphate and the respective free bases. Can use uridine, adenosine, guanosine, cytidine, thymidine, inosine and xanthosine as substrates. Also catalyzes the reverse reactions. This is Pyrimidine/purine nucleoside phosphorylase from Sulfurimonas denitrificans (strain ATCC 33889 / DSM 1251) (Thiomicrospira denitrificans (strain ATCC 33889 / DSM 1251)).